Reading from the N-terminus, the 259-residue chain is Zinc import ATP-binding protein ZnuC (259 aa).

An ABC transporter domain is found at 11 to 225; it reads IRLENIYVHR…PEYLAIFGGQ (215 aa). ATP is bound at residue 43-50; the sequence is GPNGAGKS.

This sequence belongs to the ABC transporter superfamily. Zinc importer (TC 3.A.1.15.5) family. As to quaternary structure, the complex is composed of two ATP-binding proteins (ZnuC), two transmembrane proteins (ZnuB) and a solute-binding protein (ZnuA).

Its subcellular location is the cell inner membrane. The catalysed reaction is Zn(2+)(out) + ATP(in) + H2O(in) = Zn(2+)(in) + ADP(in) + phosphate(in) + H(+)(in). Functionally, part of the ABC transporter complex ZnuABC involved in zinc import. Responsible for energy coupling to the transport system. This Acinetobacter baylyi (strain ATCC 33305 / BD413 / ADP1) protein is Zinc import ATP-binding protein ZnuC.